A 190-amino-acid polypeptide reads, in one-letter code: FUN14 domain-containing protein 2 (190 aa).

Positions 1–13 (METSTQRTGSHLA) are enriched in polar residues. Positions 1 to 31 (METSTQRTGSHLAQTAAARHSASSRGEAARV) are disordered. Over 1 to 81 (METSTQRTGS…GQESGPSAEK (81 aa)) the chain is Cytoplasmic. A phosphoserine mark is found at S10 and S54. The chain crosses the membrane as a helical span at residues 82-102 (YSVATQLLIGGVTGWCTGFIF). The Mitochondrial intermembrane segment spans residues 103–108 (QKVGKL). The helical transmembrane segment at 109-129 (AATAVGGGFFLLQLANHTGYI) threads the bilayer. The Cytoplasmic portion of the chain corresponds to 130-165 (KVDWQRVEKDMKKAKEQLKIRKSNQIPTEVKSKAEE). S152 carries the phosphoserine modification. A helical transmembrane segment spans residues 166–186 (VVSFVKKNVLVTGGFFGGFLL). The Mitochondrial intermembrane portion of the chain corresponds to 187–190 (GMAS).

This sequence belongs to the FUN14 family.

It localises to the mitochondrion outer membrane. The protein resides in the nucleus. Its function is as follows. Binds directly and specifically 1,2-Diacyl-sn-glycero-3-phospho-(1'-myo-inositol-3',4',5'-bisphosphate) (PIP3) leading to the recruitment of PIP3 to mitochondria and may play a role in the regulation of the platelet activation via AKT/GSK3B/cGMP signaling pathways. May act as transcription factor that regulates SREBP1 (isoform SREBP-1C) expression in order to modulate triglyceride (TG) homeostasis in hepatocytes. In Bos taurus (Bovine), this protein is FUN14 domain-containing protein 2.